We begin with the raw amino-acid sequence, 157 residues long: MFDVLMYLFETYVQSELDFMVDQDALTDELTRAGFQKPEIYKALSWLEQLAALHDSEDAPEYTACASDSFRIYASEEMLKLSTECRGFLLFLEQIRVLNCDTREIVIERLMELDSPEIELDDLKWVVMMVLFNLPGGENACHQMEELMFEPEAITIQ.

Belongs to the Smg family.

In Tolumonas auensis (strain DSM 9187 / NBRC 110442 / TA 4), this protein is Protein Smg homolog.